The chain runs to 759 residues: Inhibitor of nuclear factor kappa-B kinase subunit alpha (759 aa).

The segment at 1–20 (MERGAERGPPPAPGGVALRG) is disordered. The Protein kinase domain maps to 29–316 (WEMRDRLGTG…PETNSPKCFL (288 aa)). ATP-binding positions include 35-43 (LGTGGFGNV) and K58. The Proton acceptor role is filled by D158. Residues 469 to 490 (LLRYNANLIKMKNNMVSASQQL) form a leucine-zipper region. Polar residues predominate over residues 691–703 (TPAATWVPQSSSE). The disordered stretch occupies residues 691-715 (TPAATWVPQSSSEYAPHPLSSMATP). The tract at residues 753–758 (FDWSWL) is NEMO-binding.

It belongs to the protein kinase superfamily. Ser/Thr protein kinase family. I-kappa-B kinase subfamily.

Its subcellular location is the cytoplasm. The protein resides in the nucleus. It carries out the reaction L-seryl-[I-kappa-B protein] + ATP = O-phospho-L-seryl-[I-kappa-B protein] + ADP + H(+). Activated when phosphorylated and inactivated when dephosphorylated. Functionally, phosphorylates inhibitors of NF-kappa-B thus leading to the dissociation of the inhibitor/NF-kappa-B complex and ultimately the degradation of the inhibitor. Phosphorylates 'Ser-10' of histone H3 at NF-kappa-B-regulated promoters during inflammatory responses triggered by cytokines. The protein is Inhibitor of nuclear factor kappa-B kinase subunit alpha (CHUK) of Gallus gallus (Chicken).